The primary structure comprises 434 residues: 3-phosphoshikimate 1-carboxyvinyltransferase (434 aa).

3-phosphoshikimate contacts are provided by Lys15, Ser16, and Arg20. Lys15 is a phosphoenolpyruvate binding site. Residues Gly96 and Arg124 each coordinate phosphoenolpyruvate. The 3-phosphoshikimate site is built by Ser169, Gln171, Ser195, Asp319, and Lys346. Residue Gln171 participates in phosphoenolpyruvate binding. The Proton acceptor role is filled by Asp319. 2 residues coordinate phosphoenolpyruvate: Arg350 and Arg394.

This sequence belongs to the EPSP synthase family. As to quaternary structure, monomer.

The protein localises to the cytoplasm. The enzyme catalyses 3-phosphoshikimate + phosphoenolpyruvate = 5-O-(1-carboxyvinyl)-3-phosphoshikimate + phosphate. Its pathway is metabolic intermediate biosynthesis; chorismate biosynthesis; chorismate from D-erythrose 4-phosphate and phosphoenolpyruvate: step 6/7. Functionally, catalyzes the transfer of the enolpyruvyl moiety of phosphoenolpyruvate (PEP) to the 5-hydroxyl of shikimate-3-phosphate (S3P) to produce enolpyruvyl shikimate-3-phosphate and inorganic phosphate. The sequence is that of 3-phosphoshikimate 1-carboxyvinyltransferase from Chlorobaculum tepidum (strain ATCC 49652 / DSM 12025 / NBRC 103806 / TLS) (Chlorobium tepidum).